A 546-amino-acid polypeptide reads, in one-letter code: CTP synthase (546 aa).

Residues 1–266 (MTTNYIFVTG…DDLVCQRFGI (266 aa)) are amidoligase domain. Position 14 (Ser14) interacts with CTP. UTP is bound at residue Ser14. Residues 15-20 (SLGKGI) and Asp72 each bind ATP. The Mg(2+) site is built by Asp72 and Glu140. Residues 147–149 (DIE), 187–192 (KTKPTQ), and Lys223 each bind CTP. UTP-binding positions include 187 to 192 (KTKPTQ) and Lys223. Position 239 to 241 (239 to 241 (KDV)) interacts with ATP. Residues 291–542 (TIGMVGKYIE…VKAAGENARG (252 aa)) enclose the Glutamine amidotransferase type-1 domain. An L-glutamine-binding site is contributed by Gly352. The active-site Nucleophile; for glutamine hydrolysis is Cys379. Residues 380 to 383 (LGMQ), Glu403, and Arg470 contribute to the L-glutamine site. Active-site residues include His515 and Glu517.

The protein belongs to the CTP synthase family. In terms of assembly, homotetramer.

It carries out the reaction UTP + L-glutamine + ATP + H2O = CTP + L-glutamate + ADP + phosphate + 2 H(+). The enzyme catalyses L-glutamine + H2O = L-glutamate + NH4(+). It catalyses the reaction UTP + NH4(+) + ATP = CTP + ADP + phosphate + 2 H(+). It functions in the pathway pyrimidine metabolism; CTP biosynthesis via de novo pathway; CTP from UDP: step 2/2. Allosterically activated by GTP, when glutamine is the substrate; GTP has no effect on the reaction when ammonia is the substrate. The allosteric effector GTP functions by stabilizing the protein conformation that binds the tetrahedral intermediate(s) formed during glutamine hydrolysis. Inhibited by the product CTP, via allosteric rather than competitive inhibition. Functionally, catalyzes the ATP-dependent amination of UTP to CTP with either L-glutamine or ammonia as the source of nitrogen. Regulates intracellular CTP levels through interactions with the four ribonucleotide triphosphates. The protein is CTP synthase of Aliivibrio salmonicida (strain LFI1238) (Vibrio salmonicida (strain LFI1238)).